The following is a 498-amino-acid chain: uncharacterized protein (498 aa).

Position 329 to 336 (329 to 336 (GNPGTGKS)) interacts with ATP.

The protein resides in the secreted. The protein localises to the cell wall. This is an uncharacterized protein from Mycobacterium tuberculosis (strain CDC 1551 / Oshkosh).